The chain runs to 515 residues: Forkhead box protein H1 (515 aa).

The segment at tyrosine 55–lysine 103 is disordered. Positions proline 73–glutamate 84 are enriched in polar residues. Positions lysine 110–arginine 206 form a DNA-binding region, fork-head. The segment at tyrosine 307–serine 399 is disordered. The segment covering serine 322–serine 339 has biased composition (low complexity). Residues serine 375 to proline 388 are compositionally biased toward polar residues. Residues proline 377–serine 503 form an SMAD-interaction domain (SID) region. The short motif at leucine 402–tyrosine 406 is the Fast/FoxH1 motif 1 (FM1) element. Positions proline 412–proline 418 match the Fast/FoxH1 motif 2 (FM2) motif. The SMAD-interaction motif (SIM) motif lies at leucine 467–proline 488.

In terms of assembly, ARF1 contains 2 smad2s, 1 smad4 and 1 foxh1/fast-1 protein. Interaction with smad4 is most likely indirect through interaction with the MH2 domain of smad2. Binds to the MH2 domain of smad3, which can incorporate into the ARF1 complex. The ARF1 and ARF2 complexes are activated by distinct TGF-beta family members; formation of ARF1 is promoted by activin. Interacts (via Fork-head domain) with gtf2ird1/wbscr11 (via repeats 4-5).

Its subcellular location is the nucleus. Its function is as follows. Transcriptional activator. Recognizes and binds to the DNA sequence 5'-TGT[GT][GT]ATT-3'. Upon TGF-beta induction, forms a transcriptionally active complex with smad2 and smad4 called activin-responsive factor 1 (ARF1), which binds a site on the mix-B/mix.2 promoter called the activin response element (ARE). Binds to activated smads and the ARE with much lower affinity than fast3. Necessary for the first steps in mesoderm specification, directly inducing mesodermal genes. Acts with fast3 to control the convergent extension movements of gastrulation. Binds to the proximal element (PE) of the gsc gene and cooperates with gtf2ird1/wbscr11 and SMAD proteins to regulate gsc transcription. This chain is Forkhead box protein H1, found in Xenopus tropicalis (Western clawed frog).